A 135-amino-acid polypeptide reads, in one-letter code: Large ribosomal subunit protein uL18c (135 aa).

The protein belongs to the universal ribosomal protein uL18 family. As to quaternary structure, part of the 50S ribosomal subunit; contacts the 5S rRNA.

It is found in the plastid. The protein resides in the chloroplast. Functionally, binds 5S rRNA, forms part of the central protuberance of the 50S subunit. This Phaeodactylum tricornutum (strain CCAP 1055/1) protein is Large ribosomal subunit protein uL18c (rpl18).